The chain runs to 254 residues: MNAVITSLLFLSLVGLGYSWKYPRNADQTLWAFRTCQRRESDNNILKKWYTWELPNDEKTHCYVKCVWIHLGLYSKSKKSLRVNKIEKQFTSRGVAIPSDLKSMEGETDGSCKAIYDKTISFFNNNVADLRTAFYGTIEESNKWYSENPDAKPKGTKISKFCKDNNREQGESNCKHACSAYYYRLVDEDFEPIYFRLLEIKGFSNEDIDECIKQTSGRQGCQSSDALYDCLKNKNSAALKAALQILDDQSARTY.

The signal sequence occupies residues Met1–Ser19. Cystine bridges form between Cys36-Cys66 and Cys62-Cys112. Trp49 contributes to the thromboxane A2 binding site. Trp52 contacts leukotriene C4. Tyr63 is a thromboxane A2 binding site. Leukotriene C4 contacts are provided by Gly136 and Lys154. Lys154 is a thromboxane A2 binding site. Cystine bridges form between Cys162-Cys178, Cys174-Cys221, and Cys211-Cys230.

It belongs to the PBP/GOBP family.

Its subcellular location is the secreted. Its function is as follows. Modulates blood feeding of female sandflies on vertebrate species by binding and sequestering different mediators involved in the host response. Binds leukotriene C4, leukotriene D4, leukotriene E4 and U-46619, a stable analog of thromboxane A2. Does not bind histamine or serotonin. Inhibits platelet aggregation induced by low concentrations of collagen in thromboxane A2-dependent manner. The protein is Long form salivary protein D7LC of Phlebotomus papatasi (Sandfly).